A 942-amino-acid polypeptide reads, in one-letter code: UvrABC system protein A (942 aa).

Residue 32-39 (GLSGSGKS) participates in ATP binding. The C4-type zinc-finger motif lies at 251-278 (CPVCGFTVPELEPRLFSFNAPFGSCPTC). ABC transporter domains lie at 308 to 589 (WNPI…KKSI) and 609 to 937 (GNGR…HYLK). 641-648 (GVSGSGKS) serves as a coordination point for ATP. The C4-type zinc finger occupies 740–766 (CEACSGDGIIKIEMHFLPDVYVPCEVC).

This sequence belongs to the ABC transporter superfamily. UvrA family. In terms of assembly, forms a heterotetramer with UvrB during the search for lesions.

The protein localises to the cytoplasm. Its function is as follows. The UvrABC repair system catalyzes the recognition and processing of DNA lesions. UvrA is an ATPase and a DNA-binding protein. A damage recognition complex composed of 2 UvrA and 2 UvrB subunits scans DNA for abnormalities. When the presence of a lesion has been verified by UvrB, the UvrA molecules dissociate. This Streptococcus pyogenes serotype M18 (strain MGAS8232) protein is UvrABC system protein A.